A 249-amino-acid chain; its full sequence is Acidic leucine-rich nuclear phosphoprotein 32 family member A (249 aa).

Phosphothreonine is present on Thr-15. Residue Ser-17 is modified to Phosphoserine. LRR repeat units lie at residues 18-38 (DVKELVLDNCRSNEGKIEGLT), 43-64 (ELEFLSTINVGLTSVANLPKLN), 65-87 (KLKKLELSDNRISGGLEVLAEKC), and 89-110 (NLTHLNLSGNKIKDLSTIEPLK). The 39-residue stretch at 123 to 161 (CEVTNLNDYRENVFKLLPQLTYLDGYDRDDKEAPDSDAE) folds into the LRRCT domain. The span at 147 to 156 (GYDRDDKEAP) shows a compositional bias: basic and acidic residues. Residues 147–249 (GYDRDDKEAP…EPEDEGEDDD (103 aa)) form a disordered region. Residues 150–174 (RDDKEAPDSDAEGYVEGLDDDEEDE) are necessary for tumor-suppressive function. A compositionally biased stretch (acidic residues) spans 157–230 (DSDAEGYVEG…DEEDEEELGE (74 aa)). Phosphoserine occurs at positions 158 and 204. The interaction with E4F1 stretch occupies residues 165–249 (EGLDDDEEDE…EPEDEGEDDD (85 aa)).

The protein belongs to the ANP32 family. Component of the SET complex, composed of at least ANP32A, APEX1, HMGB2, NME1, SET and TREX1. Directly interacts with SET. Interacts with ATXN1/SCA1. Interacts with MAP1B. Interacts with ELAVL1. Part of the INHAT (inhibitor of histone acetyltransferases) complex. Interacts with E4F1. In terms of processing, the N-terminus is blocked. Phosphorylated on serine residues, at least in part by casein kinase 2/CK2. Post-translationally, some glutamate residues are glycylated by TTLL8. This modification occurs exclusively on glutamate residues and results in a glycine chain on the gamma-carboxyl group. Widely distributed in the central nervous system, with an abundant expression in the cerebellum.

The protein localises to the nucleus. It localises to the cytoplasm. It is found in the endoplasmic reticulum. Multifunctional protein that is involved in the regulation of many processes including tumor suppression, apoptosis, cell cycle progression or transcription. Promotes apoptosis by favouring the activation of caspase-9/CASP9 and allowing apoptosome formation. In addition, plays a role in the modulation of histone acetylation and transcription as part of the INHAT (inhibitor of histone acetyltransferases) complex. Inhibits the histone-acetyltranferase activity of EP300/CREBBP (CREB-binding protein) and EP300/CREBBP-associated factor by histone masking. Preferentially binds to unmodified histone H3 and sterically inhibiting its acetylation and phosphorylation leading to cell growth inhibition. Participates in other biochemical processes such as regulation of mRNA nuclear-to-cytoplasmic translocation and stability by its association with ELAVL1 (Hu-antigen R). Plays a role in E4F1-mediated transcriptional repression as well as inhibition of protein phosphatase 2A. The protein is Acidic leucine-rich nuclear phosphoprotein 32 family member A (ANP32A) of Bos taurus (Bovine).